The following is a 543-amino-acid chain: Chaperonin GroEL (543 aa).

ATP-binding positions include 29-32 (TVGP), 86-90 (DGTTT), glycine 413, and aspartate 504.

Belongs to the chaperonin (HSP60) family. In terms of assembly, forms a cylinder of 14 subunits composed of two heptameric rings stacked back-to-back. Interacts with the co-chaperonin GroES.

It localises to the cytoplasm. It catalyses the reaction ATP + H2O + a folded polypeptide = ADP + phosphate + an unfolded polypeptide.. In terms of biological role, together with its co-chaperonin GroES, plays an essential role in assisting protein folding. The GroEL-GroES system forms a nano-cage that allows encapsulation of the non-native substrate proteins and provides a physical environment optimized to promote and accelerate protein folding. In Mycoplasma pneumoniae (strain ATCC 29342 / M129 / Subtype 1) (Mycoplasmoides pneumoniae), this protein is Chaperonin GroEL.